A 393-amino-acid polypeptide reads, in one-letter code: Ribonucleoside-diphosphate reductase subunit M2 (393 aa).

Position 18 is a phosphoserine (Ser18). Asp142, Glu173, and His176 together coordinate Fe cation. Residue Tyr180 is part of the active site. Residues Glu236, Glu270, and His273 each contribute to the Fe cation site.

The protein belongs to the ribonucleoside diphosphate reductase small chain family. In terms of assembly, heterodimer of a large and a small subunit. Fe cation is required as a cofactor.

The protein localises to the cytoplasm. It catalyses the reaction a 2'-deoxyribonucleoside 5'-diphosphate + [thioredoxin]-disulfide + H2O = a ribonucleoside 5'-diphosphate + [thioredoxin]-dithiol. Functionally, provides the precursors necessary for DNA synthesis. Catalyzes the biosynthesis of deoxyribonucleotides from the corresponding ribonucleotides. This chain is Ribonucleoside-diphosphate reductase subunit M2 (RnrS), found in Drosophila melanogaster (Fruit fly).